The sequence spans 378 residues: Enoyl-[acyl-carrier-protein] reductase 1, mitochondrial (378 aa).

Residue Y59 is the Proton donor of the active site. Residues N151, 180–183 (NSQV), 203–206 (RDGK), 284–287 (YGGM), 309–311 (YWL), and K372 each bind NADP(+).

It belongs to the zinc-containing alcohol dehydrogenase family. Quinone oxidoreductase subfamily. In terms of assembly, homodimer.

It localises to the mitochondrion matrix. The enzyme catalyses a 2,3-saturated acyl-[ACP] + NADP(+) = a (2E)-enoyl-[ACP] + NADPH + H(+). Functionally, catalyzes the NADPH-dependent reduction of trans-2-enoyl thioesters in mitochondrial fatty acid synthesis (fatty acid synthesis type II). Fatty acid chain elongation in mitochondria uses acyl carrier protein (ACP) as an acyl group carrier, but the enzyme accepts both ACP and CoA thioesters as substrates in vitro. Required for respiration and the maintenance of the mitochondrial compartment. The sequence is that of Enoyl-[acyl-carrier-protein] reductase 1, mitochondrial (ETR1) from Debaryomyces hansenii (strain ATCC 36239 / CBS 767 / BCRC 21394 / JCM 1990 / NBRC 0083 / IGC 2968) (Yeast).